We begin with the raw amino-acid sequence, 562 residues long: Pentatricopeptide repeat-containing protein At3g22670, mitochondrial (562 aa).

A mitochondrion-targeting transit peptide spans 1–31; sequence MLTKLRISKLVSYTLPRRIFQRRFLVTNNTA. PPR repeat units lie at residues 165–199, 202–232, 238–268, 272–306, 307–341, 342–376, 377–411, 412–446, 450–484, and 485–519; these read SGHT…EESK, TLDT…MEKS, DTIA…LFDT, DART…EFTP, DVVT…GCNP, NVVT…GCVP, DAKF…GVRR, DVLV…EGES, NVET…DVSI, and DVST…GMVP.

The protein belongs to the PPR family. P subfamily.

Its subcellular location is the mitochondrion. In Arabidopsis thaliana (Mouse-ear cress), this protein is Pentatricopeptide repeat-containing protein At3g22670, mitochondrial.